Here is an 87-residue protein sequence, read N- to C-terminus: Small ribosomal subunit protein bS20 (87 aa).

It belongs to the bacterial ribosomal protein bS20 family.

Binds directly to 16S ribosomal RNA. This is Small ribosomal subunit protein bS20 from Sphingopyxis alaskensis (strain DSM 13593 / LMG 18877 / RB2256) (Sphingomonas alaskensis).